A 292-amino-acid chain; its full sequence is Light-independent protochlorophyllide reductase iron-sulfur ATP-binding protein (292 aa).

Residues 10–15 (GIGKST) and Lys39 contribute to the ATP site. Ser14 serves as a coordination point for Mg(2+). [4Fe-4S] cluster is bound at residue Cys95. 182–183 (NR) contacts ATP.

Belongs to the NifH/BchL/ChlL family. As to quaternary structure, homodimer. Protochlorophyllide reductase is composed of three subunits; ChlL, ChlN and ChlB. [4Fe-4S] cluster is required as a cofactor.

Its subcellular location is the plastid. The protein resides in the chloroplast. The enzyme catalyses chlorophyllide a + oxidized 2[4Fe-4S]-[ferredoxin] + 2 ADP + 2 phosphate = protochlorophyllide a + reduced 2[4Fe-4S]-[ferredoxin] + 2 ATP + 2 H2O. It participates in porphyrin-containing compound metabolism; chlorophyll biosynthesis (light-independent). Its function is as follows. Component of the dark-operative protochlorophyllide reductase (DPOR) that uses Mg-ATP and reduced ferredoxin to reduce ring D of protochlorophyllide (Pchlide) to form chlorophyllide a (Chlide). This reaction is light-independent. The L component serves as a unique electron donor to the NB-component of the complex, and binds Mg-ATP. This is Light-independent protochlorophyllide reductase iron-sulfur ATP-binding protein from Huperzia lucidula (Shining clubmoss).